We begin with the raw amino-acid sequence, 196 residues long: Peptidyl-tRNA hydrolase (196 aa).

Histidine 15 contributes to the tRNA binding site. Histidine 20 acts as the Proton acceptor in catalysis. TRNA contacts are provided by tyrosine 66, asparagine 68, and asparagine 114.

The protein belongs to the PTH family. In terms of assembly, monomer.

The protein resides in the cytoplasm. It catalyses the reaction an N-acyl-L-alpha-aminoacyl-tRNA + H2O = an N-acyl-L-amino acid + a tRNA + H(+). In terms of biological role, hydrolyzes ribosome-free peptidyl-tRNAs (with 1 or more amino acids incorporated), which drop off the ribosome during protein synthesis, or as a result of ribosome stalling. Catalyzes the release of premature peptidyl moieties from peptidyl-tRNA molecules trapped in stalled 50S ribosomal subunits, and thus maintains levels of free tRNAs and 50S ribosomes. The sequence is that of Peptidyl-tRNA hydrolase from Polynucleobacter asymbioticus (strain DSM 18221 / CIP 109841 / QLW-P1DMWA-1) (Polynucleobacter necessarius subsp. asymbioticus).